Here is a 358-residue protein sequence, read N- to C-terminus: Leukotriene B4 receptor 2 (358 aa).

Over 1–24 the chain is Extracellular; that stretch reads MSVCYRPPGNETLLSWKGSRATGT. An N-linked (GlcNAc...) asparagine glycan is attached at Asn10. The helical transmembrane segment at 25–45 threads the bilayer; it reads AFLLLAALLGLPGNGFVVWSL. Over 46–60 the chain is Cytoplasmic; the sequence is AGWRPTAGRPLAATL. Residues 61–81 form a helical membrane-spanning segment; sequence VLHLALADGAVLLLTPLFVAF. The Extracellular portion of the chain corresponds to 82-96; that stretch reads LSRQAWPLGQVGCKA. The helical transmembrane segment at 97-117 threads the bilayer; the sequence is VYYVCALSMYASVLLTGLLSL. The Cytoplasmic portion of the chain corresponds to 118-140; sequence QRCLAVTRPFLAPRLRSPALARR. A helical transmembrane segment spans residues 141–161; sequence LLLGVWLAALVLAVPAAVYRH. The Extracellular segment spans residues 162-185; it reads LWGDRVCQLCHPSAVHAAAHLSLE. Residues 186 to 206 form a helical membrane-spanning segment; the sequence is TLTAFVLPFGTVLGCYGVTLA. Topologically, residues 207–225 are cytoplasmic; the sequence is RLRGARWGSGRQGTRVGRL. A helical transmembrane segment spans residues 226 to 246; it reads VSAIVLAFGLLWAPYHAVNLL. Residues 247–275 are Extracellular-facing; that stretch reads QAVAALAPPEGPLARLGGAGQAARAGTTA. The chain crosses the membrane as a helical span at residues 276 to 296; that stretch reads LAFFSSSVNPVLYVFTAGDLL. Residues 297-358 lie on the Cytoplasmic side of the membrane; it reads PRAGPRFLTR…GRMEKDSQEW (62 aa). The disordered stretch occupies residues 315–358; it reads RVGSRSREGTMELRTTPRLKVVGQGRGYGDPGGGGRMEKDSQEW. Residues 338-349 are compositionally biased toward gly residues; that stretch reads QGRGYGDPGGGG.

This sequence belongs to the G-protein coupled receptor 1 family.

It is found in the cell membrane. Its function is as follows. Low-affinity receptor for leukotrienes including leukotriene B4. Mediates chemotaxis of granulocytes and macrophages. The response is mediated via G-proteins that activate a phosphatidylinositol-calcium second messenger system. This Rattus norvegicus (Rat) protein is Leukotriene B4 receptor 2 (Ltb4r2).